The sequence spans 367 residues: MFLGTLVPFLFVLTVVVFVHEMGHYLVGRWCGIGVRAFSIGFGPELIGFNDRHGTRWKLCAIPLGGYVKFVGDMNATSSQPTSEELETLTDEERKVAFHTQAIWKRAATVVAGPLFNFLLTIVVFSVLFASYGRYVAEPMVAEVTADSPAAKAGIQPGDRFVSVDGSKVETFGDVQRLVSGRAGDTITFVMLRDGKEVTVTATPQLMEQQDALGNKVKVAVIGVVNNKELGQPRLITYTPVGAVAAAVEETGHVIQRTGQFLQRFAVGREDKCQLGGPVKIADMAGKAAKLGFEWLVQLVALLSVGIGFLNLLPIPPLDGGHLLFYGVEAVIRRPVSERMMEMAYRAGLLLVLCFMGFVFWNDLFGC.

A Zn(2+)-binding site is contributed by H20. E21 is an active-site residue. H24 provides a ligand contact to Zn(2+). Helical transmembrane passes span 108–130 (ATVV…VLFA), 291–313 (LGFE…LNLL), and 343–365 (MAYR…NDLF). The 76-residue stretch at 121-196 (TIVVFSVLFA…ITFVMLRDGK (76 aa)) folds into the PDZ domain.

This sequence belongs to the peptidase M50B family. Zn(2+) serves as cofactor.

It is found in the cell inner membrane. The chain is Putative zinc metalloprotease mll0638 from Mesorhizobium japonicum (strain LMG 29417 / CECT 9101 / MAFF 303099) (Mesorhizobium loti (strain MAFF 303099)).